The chain runs to 369 residues: DNA replication and repair protein RecF (369 aa).

30 to 37 (GDNGSGKT) contributes to the ATP binding site.

Belongs to the RecF family.

The protein localises to the cytoplasm. Functionally, the RecF protein is involved in DNA metabolism; it is required for DNA replication and normal SOS inducibility. RecF binds preferentially to single-stranded, linear DNA. It also seems to bind ATP. The chain is DNA replication and repair protein RecF from Pseudomonas aeruginosa (strain LESB58).